Here is a 349-residue protein sequence, read N- to C-terminus: GDSL esterase/lipase At2g19050 (349 aa).

The first 23 residues, 1 to 23 (MAEAIFKALLLVIATTAFATTEA), serve as a signal peptide directing secretion. The Nucleophile role is filled by serine 38. A glycan (N-linked (GlcNAc...) asparagine) is linked at asparagine 49. Catalysis depends on residues aspartate 316 and histidine 319.

This sequence belongs to the 'GDSL' lipolytic enzyme family.

It localises to the secreted. The chain is GDSL esterase/lipase At2g19050 from Arabidopsis thaliana (Mouse-ear cress).